We begin with the raw amino-acid sequence, 903 residues long: E3 ubiquitin-protein ligase DDB_G0292642 (903 aa).

Disordered stretches follow at residues 115–137 (FTLP…SSSD), 167–236 (LLKR…VIGS), 284–366 (VNKT…NNLK), 415–487 (TPSL…TTEI), and 549–576 (DDSE…GSEG). Low complexity-rich tracts occupy residues 120–130 (TTNNNNNNTTN) and 178–216 (TTTT…TIDT). The span at 217–232 (SSEDDDESISSSDDDI) shows a compositional bias: acidic residues. Low complexity-rich tracts occupy residues 287-301 (TSTT…TTTT) and 311-323 (NRNN…NNNN). A coiled-coil region spans residues 313–352 (NNNNNNNNNNNKRFEIESEEESETDISSEEEENNNNNNNN). Residues 329–345 (ESEEESETDISSEEEEN) show a composition bias toward acidic residues. Over residues 346–364 (NNNNNNNSNNNNNSNNNNN) the composition is skewed to low complexity. Residues 415–427 (TPSLRLSSAHLPN) show a composition bias toward polar residues. Residues 428–443 (TTTTTTTTTTTTTTTT) show a composition bias toward low complexity. 2 stretches are compositionally biased toward acidic residues: residues 451–466 (NDDD…DSEI) and 549–568 (DDSE…ESDS). Residues 542-569 (AELVFEYDDSEEEEEEEEEEEGEESDSE) are a coiled coil. Residues 612–832 (EPVECKICYM…NEYPECFDRQ (221 aa)) form a TRIAD supradomain region. Positions 616, 619, 634, 636, 639, 642, 661, 666, 704, 709, 725, 728, 733, 736, 741, 746, 782, and 785 each coordinate Zn(2+). The RING-type 1 zinc-finger motif lies at 616–666 (CKICYMEYDQSNEVFTLECDHVYCFDCITEHLRILITEGRVLDISCPHPQC). An IBR-type zinc finger spans residues 683 to 746 (NWLKYQKFSM…GEYSHEGAKC (64 aa)). The segment at 782-811 (CPTCKSHIEKHDGCNHMTCINCQHQFCWLC) adopts an RING-type 2; atypical zinc-finger fold. Cys795 is an active-site residue. 6 residues coordinate Zn(2+): Cys800, Cys803, Cys808, Cys811, His819, and Cys828. A helical membrane pass occupies residues 864-884 (TAAFTVGAPLLLIGGAVLLCV).

The protein belongs to the RBR family. RNF14 subfamily.

It is found in the membrane. The enzyme catalyses [E2 ubiquitin-conjugating enzyme]-S-ubiquitinyl-L-cysteine + [acceptor protein]-L-lysine = [E2 ubiquitin-conjugating enzyme]-L-cysteine + [acceptor protein]-N(6)-ubiquitinyl-L-lysine.. The protein operates within protein modification; protein ubiquitination. E3 ubiquitin-protein ligase. The sequence is that of E3 ubiquitin-protein ligase DDB_G0292642 from Dictyostelium discoideum (Social amoeba).